A 200-amino-acid polypeptide reads, in one-letter code: Rho-related protein racD (200 aa).

GTP-binding residues include Ala20, Gly22, Lys23, Thr24, Cys25, Tyr39, and Thr42. Thr24 contacts Mg(2+). 2 short sequence motifs (switch) span residues 33–44 (NEFPKDYVPTVF) and 64–82 (DTAG…YPNT). Thr42 contributes to the Mg(2+) binding site. The GTP site is built by Lys123, Asp125, and Ala166. Cysteine methyl ester is present on Cys197. Cys197 carries the S-geranylgeranyl cysteine lipid modification. The propeptide at 198 to 200 (ALL) is removed in mature form.

It belongs to the small GTPase superfamily. Rho family. Mg(2+) is required as a cofactor.

The protein resides in the cell membrane. The protein localises to the cytoplasm. It localises to the cytoskeleton. It carries out the reaction GTP + H2O = GDP + phosphate + H(+). Its activity is regulated as follows. Regulated by guanine nucleotide exchange factors (GEFs) which promote the exchange of bound GDP for free GTP, GTPase activating proteins (GAPs) which increase the GTP hydrolysis activity, and GDP dissociation inhibitors which inhibit the dissociation of the nucleotide from the GTPase. Small GTPase which cycles between active GTP-bound and inactive GDP-bound states. The polypeptide is Rho-related protein racD (Entamoeba histolytica (strain ATCC 30459 / HM-1:IMSS / ABRM)).